Consider the following 145-residue polypeptide: Polytheonamide B (145 aa).

A propeptide spanning residues 1 to 96 (MADSDNTPTS…DDDLDQAAGG (96 aa)) is cleaved from the precursor. Thr-97 carries the post-translational modification 2-oxo-5,5-dimethylhexanoate. At Ile-99 the chain carries 3-methylisoleucine. 3-methylvaline is present on Val-101. The residue at position 102 (Val-102) is a 3-methyl-D-valine. Val-103 is subject to 3-methylvaline. At Ala-104 the chain carries D-alanine (Ala). Residue Val-105 is modified to 3-methylvaline. 3-methyl-D-valine is present on residues Val-106 and Val-110. Asn-112 bears the N4-methyl-D-asparagine mark. Thr-113 bears the 3-hydroxyvaline (Thr) mark. Val-117 carries the 3-methylvaline modification. Asn-118 is modified (N4-methyl-D-asparagine). Gln-119 is modified ((3S)-3-methylglutamine). Val-120 is modified (3-hydroxy-D-valine). Asn-124 carries the N4-methyl-D-asparagine modification. A (3R)-N4-methyl-3-hydroxy-D-asparagine modification is found at Asn-126. Val-127 is subject to 3-methylvaline. 3-hydroxy-D-valine is present on Val-128. 2 positions are modified to N4-methyl-D-asparagine: Asn-130 and Asn-132. Position 134 is a (3R)-N4-methyl-3-hydroxy-D-asparagine (Asn-134). An N4-methyl-D-asparagine modification is found at Asn-136. Position 138 is a D-serine (Ser) (Ser-138). Asn-140 is subject to D-asparagine. 3,3-dimethylmethionine is present on Met-141. Asn-142 bears the D-asparagine mark. At Thr-144 the chain carries D-threonine.

Post-translationally, epimerization of most, and perhaps all, L- to D-amino acids is catalyzed by PoyD, when PoyA and PoyD are coexpressed in E.coli. N-methylations are catalyzed by PoyE, when PoyA and PoyE are coexpressed in E.coli. In terms of processing, to obtain 2-oxo-5,5-dimethylhexanoate, Thr-97 is firstly dehydrated by PoyF. The second step possibly corresponds to methylation by PoyB/C, and the third step may be a cleavage by PoyH/J.

Its function is as follows. Antimicrobial peptide active against Gram-positive bacteria (MIC=4-&gt;125 ug/ml). May act by forming transmembrane ion channels, since the peptide rapidly depolarizes the bacterial cytoplasmic membrane, simultaneously decreasing the membrane potential and intracellular potassium contents. The protein is Polytheonamide B of Bacterium symbiont subsp. Theonella swinhoei (strain pTSMAC1).